The sequence spans 244 residues: Tetraspanin-7 (244 aa).

Residues 1–11 (METKPVITCLK) are Cytoplasmic-facing. A helical transmembrane segment spans residues 12-35 (TLLIIYSFVFWITGVILLAVGVWG). Over 36–51 (KLTLGTYISLIAENST) the chain is Extracellular. A glycan (N-linked (GlcNAc...) asparagine) is linked at N49. The chain crosses the membrane as a helical span at residues 52 to 70 (NAPYVLIGTGTTIVVFGLF). Topologically, residues 71–81 (GCFATCRGSPW) are cytoplasmic. A helical membrane pass occupies residues 82 to 107 (MLKLYAMFLSLVFLAELVAGISGFVF). Over 108–208 (RHEIKDTFLR…LVTSFMETNM (101 aa)) the chain is Extracellular. 4 N-linked (GlcNAc...) asparagine glycosylation sites follow: N150, N153, N172, and N183. Residues 209–229 (GIIAGVAFGIAFSQLIGMLLA) traverse the membrane as a helical segment. Topologically, residues 230 to 244 (CCLSRFITANQYEMV) are cytoplasmic.

This sequence belongs to the tetraspanin (TM4SF) family.

It is found in the membrane. Functionally, may be involved in cell proliferation and cell motility. This is Tetraspanin-7 (TSPAN7) from Pan troglodytes (Chimpanzee).